The following is a 178-amino-acid chain: Interleukin-10 (178 aa).

The first 18 residues, 1–18, serve as a signal peptide directing secretion; the sequence is MHSSALLCCLVLLTGVRA. 2 cysteine pairs are disulfide-bonded: Cys30/Cys126 and Cys80/Cys132. Residue Asn134 is glycosylated (N-linked (GlcNAc...) asparagine).

This sequence belongs to the IL-10 family. Homodimer. Interacts with IL10RA and IL10RB.

Its subcellular location is the secreted. Major immune regulatory cytokine that acts on many cells of the immune system where it has profound anti-inflammatory functions, limiting excessive tissue disruption caused by inflammation. Mechanistically, IL10 binds to its heterotetrameric receptor comprising IL10RA and IL10RB leading to JAK1 and STAT2-mediated phosphorylation of STAT3. In turn, STAT3 translocates to the nucleus where it drives expression of anti-inflammatory mediators. Targets antigen-presenting cells (APCs) such as macrophages and monocytes and inhibits their release of pro-inflammatory cytokines including granulocyte-macrophage colony-stimulating factor /GM-CSF, granulocyte colony-stimulating factor/G-CSF, IL-1 alpha, IL-1 beta, IL-6, IL-8 and TNF-alpha. Also interferes with antigen presentation by reducing the expression of MHC-class II and co-stimulatory molecules, thereby inhibiting their ability to induce T cell activation. In addition, controls the inflammatory response of macrophages by reprogramming essential metabolic pathways including mTOR signaling. The chain is Interleukin-10 (IL10) from Macaca nemestrina (Pig-tailed macaque).